Reading from the N-terminus, the 163-residue chain is Photosystem II extrinsic protein V (163 aa).

The first 26 residues, 1-26 (MLKRSSWLAALLGLLTVVSTSTHTYA), serve as a signal peptide directing secretion. The heme c site is built by cysteine 63, cysteine 66, histidine 67, and histidine 118.

This sequence belongs to the cytochrome c family. PsbV subfamily. PSII is composed of 1 copy each of membrane proteins PsbA, PsbB, PsbC, PsbD, PsbE, PsbF, PsbH, PsbI, PsbJ, PsbK, PsbL, PsbM, PsbT, PsbY, PsbZ, Psb30/Ycf12, at least 3 peripheral proteins of the oxygen-evolving complex and a large number of cofactors. It forms dimeric complexes. The extrinsic subunits in red algae are PsbO (OEC33), PsbQ', cytochrome c-550 and PsbU. The cofactor is heme c.

It localises to the plastid. The protein localises to the chloroplast thylakoid membrane. Its function is as follows. One of the extrinsic, lumenal subunits of photosystem II (PSII). PSII is a light-driven water plastoquinone oxidoreductase, using light energy to abstract electrons from H(2)O, generating a proton gradient subsequently used for ATP formation. The extrinsic proteins stabilize the structure of photosystem II oxygen-evolving complex (OEC), the ion environment of oxygen evolution and protect the OEC against heat-induced inactivation. In Pyropia yezoensis (Susabi-nori), this protein is Photosystem II extrinsic protein V.